Consider the following 765-residue polypeptide: Dipeptidyl peptidase 4 (765 aa).

Residues 1–6 (MKTPWK) lie on the Cytoplasmic side of the membrane. The helical; Signal-anchor for type II membrane protein transmembrane segment at 7-29 (VLLGLLGLAALITIITVPVVLLN) threads the bilayer. The Extracellular segment spans residues 30–765 (KGNDAAADSR…HFIKQCFSLP (736 aa)). Asn-84, Asn-91, Asn-149, Asn-178, Asn-228, Asn-280, Asn-320, Asn-330, and Asn-331 each carry an N-linked (GlcNAc...) asparagine glycan. 3 cysteine pairs are disulfide-bonded: Cys-384–Cys-393, Cys-443–Cys-446, and Cys-453–Cys-471. Asn-519 is a glycosylation site (N-linked (GlcNAc...) asparagine). The active-site Charge relay system is the Ser-629. Cys-648 and Cys-761 are oxidised to a cystine. N-linked (GlcNAc...) asparagine glycosylation occurs at Asn-684. Active-site charge relay system residues include Asp-707 and His-739.

The protein belongs to the peptidase S9B family. DPPIV subfamily. As to quaternary structure, monomer. Homodimer. Heterodimer with Seprase (FAP). Requires homodimerization for optimal dipeptidyl peptidase activity and T-cell costimulation. Found in a membrane raft complex, at least composed of BCL10, CARD11, DPP4 and IKBKB. Associates with collagen. Interacts with PTPRC; the interaction is enhanced in an interleukin-12-dependent manner in activated lymphocytes. Interacts (extracellular domain) with ADA; does not inhibit its dipeptidyl peptidase activity. Interacts with CAV1 (via the N-terminus); the interaction is direct. Interacts (via cytoplasmic tail) with CARD11 (via PDZ domain); its homodimerization is necessary for interaction with CARD11. Interacts with IGF2R; the interaction is direct. Interacts with GPC3. Post-translationally, the soluble form (Dipeptidyl peptidase 4 soluble form also named SDPP) derives from the membrane form (Dipeptidyl peptidase 4 membrane form also named MDPP) by proteolytic processing. N- and O-Glycosylated. In terms of processing, phosphorylated. Mannose 6-phosphate residues in the carbohydrate moiety are necessary for interaction with IGF2R in activated T-cells. Mannose 6-phosphorylation is induced during T-cell activation.

It is found in the secreted. The protein localises to the cell membrane. Its subcellular location is the apical cell membrane. It localises to the cell projection. The protein resides in the invadopodium membrane. It is found in the lamellipodium membrane. The protein localises to the cell junction. Its subcellular location is the membrane raft. The catalysed reaction is Release of an N-terminal dipeptide, Xaa-Yaa-|-Zaa-, from a polypeptide, preferentially when Yaa is Pro, provided Zaa is neither Pro nor hydroxyproline.. Its activity is regulated as follows. Inhibited by GPC3 and diprotin A. Cell surface glycoprotein receptor involved in the costimulatory signal essential for T-cell receptor (TCR)-mediated T-cell activation. Acts as a positive regulator of T-cell coactivation, by binding at least ADA, CAV1, IGF2R, and PTPRC. Its binding to CAV1 and CARD11 induces T-cell proliferation and NF-kappa-B activation in a T-cell receptor/CD3-dependent manner. Its interaction with ADA also regulates lymphocyte-epithelial cell adhesion. In association with FAP is involved in the pericellular proteolysis of the extracellular matrix (ECM), the migration and invasion of endothelial cells into the ECM. May be involved in the promotion of lymphatic endothelial cells adhesion, migration and tube formation. When overexpressed, enhanced cell proliferation, a process inhibited by GPC3. Also acts as a serine exopeptidase with a dipeptidyl peptidase activity that regulates various physiological processes by cleaving peptides in the circulation, including many chemokines, mitogenic growth factors, neuropeptides and peptide hormones. Removes N-terminal dipeptides sequentially from polypeptides having unsubstituted N-termini provided that the penultimate residue is proline. The sequence is that of Dipeptidyl peptidase 4 (DPP4) from Felis catus (Cat).